A 599-amino-acid chain; its full sequence is Elongation factor 4 (599 aa).

Residues 2–184 (KNIRNFSIIA…RLVRDIPPPQ (183 aa)) form the tr-type G domain. Residues 14–19 (DHGKST) and 131–134 (NKID) each bind GTP.

Belongs to the TRAFAC class translation factor GTPase superfamily. Classic translation factor GTPase family. LepA subfamily.

Its subcellular location is the cell inner membrane. The catalysed reaction is GTP + H2O = GDP + phosphate + H(+). Its function is as follows. Required for accurate and efficient protein synthesis under certain stress conditions. May act as a fidelity factor of the translation reaction, by catalyzing a one-codon backward translocation of tRNAs on improperly translocated ribosomes. Back-translocation proceeds from a post-translocation (POST) complex to a pre-translocation (PRE) complex, thus giving elongation factor G a second chance to translocate the tRNAs correctly. Binds to ribosomes in a GTP-dependent manner. The chain is Elongation factor 4 from Salmonella gallinarum (strain 287/91 / NCTC 13346).